The chain runs to 100 residues: Urease subunit gamma (100 aa).

Belongs to the urease gamma subunit family. In terms of assembly, heterotrimer of UreA (gamma), UreB (beta) and UreC (alpha) subunits. Three heterotrimers associate to form the active enzyme.

It localises to the cytoplasm. It carries out the reaction urea + 2 H2O + H(+) = hydrogencarbonate + 2 NH4(+). Its pathway is nitrogen metabolism; urea degradation; CO(2) and NH(3) from urea (urease route): step 1/1. In Marinomonas sp. (strain MWYL1), this protein is Urease subunit gamma.